The primary structure comprises 352 residues: tRNA pseudouridine synthase D (352 aa).

The active-site Nucleophile is the D78. A TRUD domain is found at 153 to 299 (GVPNYYGEQR…LDQDRRPLLL (147 aa)).

Belongs to the pseudouridine synthase TruD family.

It carries out the reaction uridine(13) in tRNA = pseudouridine(13) in tRNA. Its function is as follows. Responsible for synthesis of pseudouridine from uracil-13 in transfer RNAs. In Aeromonas salmonicida (strain A449), this protein is tRNA pseudouridine synthase D.